The chain runs to 250 residues: MILLISDLHLEEERPDITRAFLELLGGRARAAEALYILGDFFEVWIGDDAMTPYQLSICQALRELSDSGTQIFLMHGNRDFMLGKAFCKAAGATLLKDPSVVDFYGEPVLLMHGDSLCTRDEAYMRMRRYLRNPLSLWILRHLPLGTRRKLARKLRNESRAQTRMKANDIVDVTPDQVPQVMQEHGVRTLVHGHTHRPAIHKLQIGEQAAKRIVLGDWDRQGWALQVDEQGFQLAAFDFVPTQLALPGSP.

Residues D7, H9, D40, N78, and H113 each contribute to the Mn(2+) site. Position 78-79 (78-79 (NR)) interacts with substrate. Substrate contacts are provided by D121, S159, T163, K166, and H194. H194 and H196 together coordinate Mn(2+).

It belongs to the LpxH family. It depends on Mn(2+) as a cofactor.

Its subcellular location is the cell inner membrane. The enzyme catalyses UDP-2-N,3-O-bis[(3R)-3-hydroxytetradecanoyl]-alpha-D-glucosamine + H2O = 2-N,3-O-bis[(3R)-3-hydroxytetradecanoyl]-alpha-D-glucosaminyl 1-phosphate + UMP + 2 H(+). Its pathway is glycolipid biosynthesis; lipid IV(A) biosynthesis; lipid IV(A) from (3R)-3-hydroxytetradecanoyl-[acyl-carrier-protein] and UDP-N-acetyl-alpha-D-glucosamine: step 4/6. In terms of biological role, hydrolyzes the pyrophosphate bond of UDP-2,3-diacylglucosamine to yield 2,3-diacylglucosamine 1-phosphate (lipid X) and UMP by catalyzing the attack of water at the alpha-P atom. Involved in the biosynthesis of lipid A, a phosphorylated glycolipid that anchors the lipopolysaccharide to the outer membrane of the cell. The polypeptide is UDP-2,3-diacylglucosamine hydrolase (Pseudomonas fluorescens (strain ATCC BAA-477 / NRRL B-23932 / Pf-5)).